The chain runs to 156 residues: Small ribosomal subunit protein uS7 (156 aa).

It belongs to the universal ribosomal protein uS7 family. Part of the 30S ribosomal subunit. Contacts proteins S9 and S11.

One of the primary rRNA binding proteins, it binds directly to 16S rRNA where it nucleates assembly of the head domain of the 30S subunit. Is located at the subunit interface close to the decoding center, probably blocks exit of the E-site tRNA. This is Small ribosomal subunit protein uS7 from Pseudomonas fluorescens (strain ATCC BAA-477 / NRRL B-23932 / Pf-5).